The chain runs to 325 residues: GMP reductase (325 aa).

Catalysis depends on Cys-174, which acts as the Thioimidate intermediate. 203 to 226 serves as a coordination point for NADP(+); sequence LIADGGIRTHGDIAKSIRFGASMV.

Belongs to the IMPDH/GMPR family. GuaC type 2 subfamily.

The enzyme catalyses IMP + NH4(+) + NADP(+) = GMP + NADPH + 2 H(+). In terms of biological role, catalyzes the irreversible NADPH-dependent deamination of GMP to IMP. It functions in the conversion of nucleobase, nucleoside and nucleotide derivatives of G to A nucleotides, and in maintaining the intracellular balance of A and G nucleotides. This is GMP reductase from Staphylococcus aureus (strain NCTC 8325 / PS 47).